We begin with the raw amino-acid sequence, 215 residues long: Cytochrome b6 (215 aa).

The chain crosses the membrane as a helical span at residues 32-52; that stretch reads IFYCLGGITLTCFLVQVATGF. C35 is a binding site for heme c. Positions 86 and 100 each coordinate heme b. Transmembrane regions (helical) follow at residues 90–110, 116–136, and 186–206; these read ASMMVLMMILHVFRVYLTGGF, LTWVTGVVLAVLTASFGVTGY, and LHTFVLPLLTAVFMLMHFLMI. H187 and H202 together coordinate heme b.

The protein belongs to the cytochrome b family. PetB subfamily. The 4 large subunits of the cytochrome b6-f complex are cytochrome b6, subunit IV (17 kDa polypeptide, PetD), cytochrome f and the Rieske protein, while the 4 small subunits are PetG, PetL, PetM and PetN. The complex functions as a dimer. Requires heme b as cofactor. Heme c is required as a cofactor.

The protein resides in the plastid. Its subcellular location is the chloroplast thylakoid membrane. Its function is as follows. Component of the cytochrome b6-f complex, which mediates electron transfer between photosystem II (PSII) and photosystem I (PSI), cyclic electron flow around PSI, and state transitions. The chain is Cytochrome b6 from Morus indica (Mulberry).